A 931-amino-acid chain; its full sequence is Short transient receptor potential channel 6 (931 aa).

Residues 1 to 24 are disordered; sequence MNQSPAAFGPRRGGSPAVVAGAGA. Residues 1 to 406 lie on the Cytoplasmic side of the membrane; it reads MNQSPAAFGP…GLRQQTMAVK (406 aa). Residues 13–24 show a composition bias toward low complexity; sequence GGSPAVVAGAGA. ANK repeat units follow at residues 131–160, 162–188, and 217–246; these read MGQN…LSRV, DALL…FAEG, and HDVT…RIER. The helical transmembrane segment at 407–427 threads the bilayer; it reads FLVVLAVAVGLPFLALVYWFA. The Extracellular portion of the chain corresponds to 428 to 438; that stretch reads PCSKMGKIMRG. Residues 439-459 form a helical membrane-spanning segment; it reads PFMKFVAHAASFTIFLGLLVM. Residues 460-487 lie on the Cytoplasmic side of the membrane; it reads NAADRFEGTKILPNETSTDHAKQLFRMK. The chain crosses the membrane as a helical span at residues 488-508; it reads TSCFSWMEMLIISWVIGMIWA. Topologically, residues 509–521 are extracellular; that stretch reads ECKEIWTQGPKEY. The helical transmembrane segment at 522 to 542 threads the bilayer; sequence LFELWNMLDFGMLAIFAASFI. At 543–592 the chain is on the cytoplasmic side; the sequence is ARFMAFWHASKAQSIIDANDTLKDLTKVTLGDNVKYYNLARIKWDPSDPQ. Residues 593–613 form a helical membrane-spanning segment; it reads IISEGLYAIAVVLSFSRIAYI. Topologically, residues 614 to 636 are extracellular; the sequence is LPANESFGPLQISLGRTVKDIFK. N-linked (GlcNAc...) asparagine glycosylation occurs at asparagine 617. The ANK 4 repeat unit spans residues 618 to 647; that stretch reads ESFGPLQISLGRTVKDIFKFMVIFIMVFVA. Residues 637–657 form a helical membrane-spanning segment; sequence FMVIFIMVFVAFMIGMFNLYS. Residues 658–674 are Cytoplasmic-facing; that stretch reads YYIGAKQNEAFTTVEES. Residues 675 to 695 traverse the membrane as a helical segment; it reads FKTLFWAIFGLSEVKSVVINY. Topologically, residues 696 to 706 are extracellular; the sequence is NHKFIENIGYV. The chain crosses the membrane as a helical span at residues 707-727; sequence LYGVYNVTMVIVLLNMLIAMI. Over 728–931 the chain is Cytoplasmic; sequence NSSFQEIEDD…MEPNQEESNR (204 aa). At serine 815 the chain carries Phosphoserine.

The protein belongs to the transient receptor (TC 1.A.4) family. STrpC subfamily. TRPC6 sub-subfamily. In terms of assembly, homodimer; forms channel complex. Interacts with MX1 and RNF24. In terms of processing, phosphorylated by FYN, leading to an increase of TRPC6 channel activity.

It localises to the cell membrane. The enzyme catalyses Ca(2+)(in) = Ca(2+)(out). Functionally, thought to form a receptor-activated non-selective calcium permeant cation channel. Probably is operated by a phosphatidylinositol second messenger system activated by receptor tyrosine kinases or G-protein coupled receptors. Activated by diacylglycerol (DAG) in a membrane-delimited fashion, independently of protein kinase C. Seems not to be activated by intracellular calcium store depletion. The polypeptide is Short transient receptor potential channel 6 (Bos taurus (Bovine)).